Here is a 452-residue protein sequence, read N- to C-terminus: Biotin carboxylase (452 aa).

The 445-residue stretch at 1-445 folds into the Biotin carboxylation domain; it reads MFKKVLIANR…TTAFVTNHLK (445 aa). Residues Lys-116, Lys-158, 164–165, 200–203, His-208, and His-235 each bind ATP; these read GG and EKAV. The ATP-grasp domain occupies 120-317; sequence RTAMQTAGVP…LVEWQLLIAA (198 aa). Residue Lys-237 participates in hydrogencarbonate binding. Glu-275 and Glu-288 together coordinate ATP. Mg(2+) is bound by residues Glu-275, Glu-288, and Asn-290. Mn(2+)-binding residues include Glu-275, Glu-288, and Asn-290. The hydrogencarbonate site is built by Arg-292, Val-295, and Arg-338. The active site involves Arg-292. A biotin-binding site is contributed by Arg-338.

Acetyl-CoA carboxylase is a heterohexamer of biotin carboxyl carrier protein, biotin carboxylase and the two subunits of carboxyl transferase in a 2:2 complex. Requires Mg(2+) as cofactor. The cofactor is Mn(2+).

It catalyses the reaction N(6)-biotinyl-L-lysyl-[protein] + hydrogencarbonate + ATP = N(6)-carboxybiotinyl-L-lysyl-[protein] + ADP + phosphate + H(+). It functions in the pathway lipid metabolism; malonyl-CoA biosynthesis; malonyl-CoA from acetyl-CoA: step 1/1. This protein is a component of the acetyl coenzyme A carboxylase complex; first, biotin carboxylase catalyzes the carboxylation of the carrier protein and then the transcarboxylase transfers the carboxyl group to form malonyl-CoA. In Halalkalibacterium halodurans (strain ATCC BAA-125 / DSM 18197 / FERM 7344 / JCM 9153 / C-125) (Bacillus halodurans), this protein is Biotin carboxylase (accC).